The primary structure comprises 484 residues: ETS translocation variant 4 (484 aa).

Residue K6 forms a Glycyl lysine isopeptide (Lys-Gly) (interchain with G-Cter in SUMO2) linkage. The tract at residues 90-115 (SPTTRIKKEPQSPRTDPALSCSRKPP) is disordered. Residue K96 forms a Glycyl lysine isopeptide (Lys-Gly) (interchain with G-Cter in SUMO) linkage. S101 carries the phosphoserine modification. K139 participates in a covalent cross-link: Glycyl lysine isopeptide (Lys-Gly) (interchain with G-Cter in SUMO2). Residues S140, S149, and S214 each carry the phosphoserine modification. Residues K226 and K260 each participate in a glycyl lysine isopeptide (Lys-Gly) (interchain with G-Cter in SUMO) cross-link. Residue K322 forms a Glycyl lysine isopeptide (Lys-Gly) (interchain with G-Cter in SUMO2) linkage. The segment at residues 341–421 (LQLWQFLVAL…AGERYVYKFV (81 aa)) is a DNA-binding region (ETS).

It belongs to the ETS family. In terms of processing, sumoylated; enhanced upon ERK/MAP kinase pathway activation, it positively regulates the transcriptional activator capacity. Sumoylation at Lys-96 probably requires phosphorylation at Ser-101. Transiently polysumoylated and desumoylated by SENP1. Sumoylation is a prerequisite to polyubiquitination which in turn increases proteasomal-mediated degradation. Probably polyubiquitinated by RNF4 and deubiquitinated by USP2. In terms of tissue distribution, expressed in keratinocytes.

It is found in the nucleus. Its function is as follows. Transcriptional activator. May play a role in keratinocyte differentiation. (Microbial infection) Binds to the enhancer of the adenovirus E1A gene and acts as a transcriptional activator; the core-binding sequence is 5'-[AC]GGA[AT]GT-3'. The polypeptide is ETS translocation variant 4 (ETV4) (Homo sapiens (Human)).